The chain runs to 196 residues: UPF0301 protein BT_1078 (196 aa).

The protein belongs to the UPF0301 (AlgH) family.

This is UPF0301 protein BT_1078 from Bacteroides thetaiotaomicron (strain ATCC 29148 / DSM 2079 / JCM 5827 / CCUG 10774 / NCTC 10582 / VPI-5482 / E50).